The sequence spans 194 residues: Imidazoleglycerol-phosphate dehydratase (194 aa).

The protein belongs to the imidazoleglycerol-phosphate dehydratase family.

The protein resides in the cytoplasm. It carries out the reaction D-erythro-1-(imidazol-4-yl)glycerol 3-phosphate = 3-(imidazol-4-yl)-2-oxopropyl phosphate + H2O. Its pathway is amino-acid biosynthesis; L-histidine biosynthesis; L-histidine from 5-phospho-alpha-D-ribose 1-diphosphate: step 6/9. The chain is Imidazoleglycerol-phosphate dehydratase from Listeria welshimeri serovar 6b (strain ATCC 35897 / DSM 20650 / CCUG 15529 / CIP 8149 / NCTC 11857 / SLCC 5334 / V8).